A 118-amino-acid polypeptide reads, in one-letter code: MISKPDKNKIRQKRHRRVRGKLSGTADRPRLNIFRSNTGIYAQVIDDVAGVTLASASTLDKEVSNGTKTEQAVVVGKLVAERAVAKGISEVVFDRGGYLYHGRVKALADSARENGLKF.

Positions Met1–Gly24 are disordered. The span at Ile10–Gly20 shows a compositional bias: basic residues.

The protein belongs to the universal ribosomal protein uL18 family. Part of the 50S ribosomal subunit; part of the 5S rRNA/L5/L18/L25 subcomplex. Contacts the 5S and 23S rRNAs.

Its function is as follows. This is one of the proteins that bind and probably mediate the attachment of the 5S RNA into the large ribosomal subunit, where it forms part of the central protuberance. This Streptococcus agalactiae serotype III (strain NEM316) protein is Large ribosomal subunit protein uL18.